The sequence spans 681 residues: MALKLLTLIALTCAAANAAKSSYKLCVPAAYMKDCEQMLEVPTKSKVALECVPARDRVECLSFVQQRQADFVPVDPEDMYVASKIPNQDFVVFQEYRTDEEPDAPFRYEAVIVVHKDLPINNLDQLKGLRSCHTGVNRNVGYKIPLTMLMKRAVFPKMNDHSISPKENELKALSTFFAKSCIVGKWSPDPKTNSAWKSQYSHLCSMCEHPERCDYPDNYSGYEGALRCLAHNNGEVAFTKVIFTRKFFGLPVGTTPASPSNENPEEFRYLCVDGSKAPITGKACSWAARPWQGLIGHNDVLAKLAPLREKVKQLADSGAADKPEWFTKVLGLSEKIHHVADNIPIKPIDYLNKANYTEVIERGHGAPELVVRLCVTSNVALSKCRAMSVFAFSRDIRPILDCVQENSEDACLKSVQDNGSDLASVDDMRVAAAAKKYNLHPVFHEVYGELKTPNYAVAVVKKGTAYNKIDDLRGKKSCHSSYSTFSGLHAPLFYLINKRAIQSDHCVKNLGEFFSGGSCLPGVDKPENNPSGDDVSKLKKQCGSDSSAWKCLEEDRGDVAFVSSADLSHFDANQYELLCLNRDAGGRDVLSSFATCNVAMAPSRTWVAAKDFLSDVSIAHTPLSLAQMLATRPDLFNIYGEFLKNNNVIFNNAAKGLATTEKLDFEKFKTIHDVISSCGLA.

Positions 1-18 (MALKLLTLIALTCAAANA) are cleaved as a signal peptide. Transferrin-like domains are found at residues 23–364 (YKLC…ERGH) and 371–676 (VRLC…DVIS). 2 disulfide bridges follow: Cys26–Cys60 and Cys35–Cys51. Residues Asp75 and Tyr108 each contribute to the Fe(3+) site. Disulfide bonds link Cys132-Cys228, Cys181-Cys207, Cys204-Cys213, and Cys271-Cys284. Hydrogencarbonate is bound by residues Thr134, Arg138, Val140, and Gly141. Asn218 carries N-linked (GlcNAc...) asparagine glycosylation. Tyr222 contacts Fe(3+). Asn355 carries an N-linked (GlcNAc...) asparagine glycan. Cystine bridges form between Cys374-Cys411 and Cys384-Cys402. An N-linked (GlcNAc...) asparagine glycan is attached at Asn418. 3 cysteine pairs are disulfide-bonded: Cys478–Cys551, Cys506–Cys678, and Cys579–Cys596.

It belongs to the transferrin family.

The protein localises to the secreted. Its function is as follows. Transferrins are iron binding transport proteins which bind Fe(3+) ion in association with the binding of an anion, usually bicarbonate. This transferrin binds only one Fe(3+) ion per protein molecule. The chain is Transferrin from Manduca sexta (Tobacco hawkmoth).